The chain runs to 297 residues: Formylmethanofuran--tetrahydromethanopterin formyltransferase (297 aa).

It belongs to the FTR family. As to quaternary structure, homotetramer.

The protein resides in the cytoplasm. It catalyses the reaction N-formylmethanofuran + 5,6,7,8-tetrahydromethanopterin + H(+) = N(5)-formyl-5,6,7,8-tetrahydromethanopterin + methanofuran. The protein operates within one-carbon metabolism; methanogenesis from CO(2); 5,10-methenyl-5,6,7,8-tetrahydromethanopterin from CO(2): step 2/3. Functionally, catalyzes the reversible transfer of a formyl group from formylmethanofuran (formyl-MFR) to tetrahydromethanopterin (H(4)MPT) to produce 5-formyl tetrahydromethanopterin (5-formyl-H(4)MPT) and methanofuran (MFR). The protein is Formylmethanofuran--tetrahydromethanopterin formyltransferase of Methanosarcina barkeri (strain Fusaro / DSM 804).